Here is a 447-residue protein sequence, read N- to C-terminus: Guanine nucleotide-binding protein alpha-1 subunit (447 aa).

G2 is lipidated: N-myristoyl glycine. A lipid anchor (S-palmitoyl cysteine) is attached at C3. The G-alpha domain maps to 40–447; it reads NEVKLLLLGA…QQNLKKSGIL (408 aa). The segment at 43–56 is G1 motif; the sequence is KLLLLGAGESGKST. GTP-binding residues include E51, S52, G53, K54, S55, T56, L269, T275, G297, N363, K364, D366, and A419. S55 is a binding site for Mg(2+). The interval 267 to 275 is G2 motif; it reads DILKGRIKT. T275 contributes to the Mg(2+) binding site. The tract at residues 290–299 is G3 motif; that stretch reads FKVYDAGGQR. Positions 359-366 are G4 motif; sequence ILFLNKVD. The tract at residues 417–422 is G5 motif; sequence TCATDT.

It belongs to the G-alpha family. G proteins are composed of 3 units; alpha, beta and gamma. The alpha chain contains the guanine nucleotide binding site. Requires Mg(2+) as cofactor.

Guanine nucleotide-binding proteins (G proteins) are involved as modulators or transducers in various transmembrane signaling systems. This protein is involved in the mating response pathway. The sequence is that of Guanine nucleotide-binding protein alpha-1 subunit (GPA1) from Kluyveromyces lactis (strain ATCC 8585 / CBS 2359 / DSM 70799 / NBRC 1267 / NRRL Y-1140 / WM37) (Yeast).